A 467-amino-acid polypeptide reads, in one-letter code: Actinorhodin polyketide putative beta-ketoacyl synthase 1 (467 aa).

The segment at 1 to 35 (MPLDAAPVDPASRGPVSAFEPPSSHGADDDDDHRT) is disordered. The Ketosynthase family 3 (KS3) domain maps to 45–459 (KRRVVITGVG…GFQSAMVLRD (415 aa)). Residues cysteine 212, histidine 352, and histidine 389 each act as for beta-ketoacyl synthase activity in the active site.

This sequence belongs to the thiolase-like superfamily. Beta-ketoacyl-ACP synthases family.

Its pathway is antibiotic biosynthesis; actinorhodin biosynthesis. In Streptomyces coelicolor (strain ATCC BAA-471 / A3(2) / M145), this protein is Actinorhodin polyketide putative beta-ketoacyl synthase 1.